Consider the following 300-residue polypeptide: UDP-N-acetylenolpyruvoylglucosamine reductase (300 aa).

The FAD-binding PCMH-type domain maps to 27 to 216; sequence RVGGPADVIF…TERREKTQPI (190 aa). Arg-172 is an active-site residue. Ser-223 functions as the Proton donor in the catalytic mechanism. Glu-293 is an active-site residue.

This sequence belongs to the MurB family. The cofactor is FAD.

Its subcellular location is the cytoplasm. The catalysed reaction is UDP-N-acetyl-alpha-D-muramate + NADP(+) = UDP-N-acetyl-3-O-(1-carboxyvinyl)-alpha-D-glucosamine + NADPH + H(+). Its pathway is cell wall biogenesis; peptidoglycan biosynthesis. Its function is as follows. Cell wall formation. In Phenylobacterium zucineum (strain HLK1), this protein is UDP-N-acetylenolpyruvoylglucosamine reductase.